Reading from the N-terminus, the 524-residue chain is Bifunctional purine biosynthesis protein PurH (524 aa).

One can recognise an MGS-like domain in the interval methionine 1–valine 145.

Belongs to the PurH family.

It carries out the reaction (6R)-10-formyltetrahydrofolate + 5-amino-1-(5-phospho-beta-D-ribosyl)imidazole-4-carboxamide = 5-formamido-1-(5-phospho-D-ribosyl)imidazole-4-carboxamide + (6S)-5,6,7,8-tetrahydrofolate. It catalyses the reaction IMP + H2O = 5-formamido-1-(5-phospho-D-ribosyl)imidazole-4-carboxamide. The protein operates within purine metabolism; IMP biosynthesis via de novo pathway; 5-formamido-1-(5-phospho-D-ribosyl)imidazole-4-carboxamide from 5-amino-1-(5-phospho-D-ribosyl)imidazole-4-carboxamide (10-formyl THF route): step 1/1. It participates in purine metabolism; IMP biosynthesis via de novo pathway; IMP from 5-formamido-1-(5-phospho-D-ribosyl)imidazole-4-carboxamide: step 1/1. This is Bifunctional purine biosynthesis protein PurH from Ralstonia nicotianae (strain ATCC BAA-1114 / GMI1000) (Ralstonia solanacearum).